The primary structure comprises 158 residues: NAD(P)H-quinone oxidoreductase subunit J, chloroplastic (158 aa).

The protein belongs to the complex I 30 kDa subunit family. As to quaternary structure, NDH is composed of at least 16 different subunits, 5 of which are encoded in the nucleus.

The protein resides in the plastid. Its subcellular location is the chloroplast thylakoid membrane. The catalysed reaction is a plastoquinone + NADH + (n+1) H(+)(in) = a plastoquinol + NAD(+) + n H(+)(out). It catalyses the reaction a plastoquinone + NADPH + (n+1) H(+)(in) = a plastoquinol + NADP(+) + n H(+)(out). Functionally, NDH shuttles electrons from NAD(P)H:plastoquinone, via FMN and iron-sulfur (Fe-S) centers, to quinones in the photosynthetic chain and possibly in a chloroplast respiratory chain. The immediate electron acceptor for the enzyme in this species is believed to be plastoquinone. Couples the redox reaction to proton translocation, and thus conserves the redox energy in a proton gradient. The protein is NAD(P)H-quinone oxidoreductase subunit J, chloroplastic of Morus indica (Mulberry).